Here is a 338-residue protein sequence, read N- to C-terminus: Holliday junction branch migration complex subunit RuvB (338 aa).

Residues 1 to 180 form a large ATPase domain (RuvB-L) region; that stretch reads MTRLVTPDIT…FGVISRLEFY (180 aa). ATP contacts are provided by residues Leu-19, Arg-20, Gly-61, Lys-64, Thr-65, Thr-66, 127-129, Arg-170, Tyr-180, and Arg-217; that span reads EDY. Thr-65 is a Mg(2+) binding site. Residues 181–251 form a small ATPAse domain (RuvB-S) region; it reads TDDELTTIVT…VVDESLKLLE (71 aa). The tract at residues 254–338 is head domain (RuvB-H); it reads EKGFDHMDRT…PPSSSQGNLF (85 aa). 3 residues coordinate DNA: Arg-290, Arg-309, and Arg-314.

The protein belongs to the RuvB family. As to quaternary structure, homohexamer. Forms an RuvA(8)-RuvB(12)-Holliday junction (HJ) complex. HJ DNA is sandwiched between 2 RuvA tetramers; dsDNA enters through RuvA and exits via RuvB. An RuvB hexamer assembles on each DNA strand where it exits the tetramer. Each RuvB hexamer is contacted by two RuvA subunits (via domain III) on 2 adjacent RuvB subunits; this complex drives branch migration. In the full resolvosome a probable DNA-RuvA(4)-RuvB(12)-RuvC(2) complex forms which resolves the HJ.

Its subcellular location is the cytoplasm. It carries out the reaction ATP + H2O = ADP + phosphate + H(+). In terms of biological role, the RuvA-RuvB-RuvC complex processes Holliday junction (HJ) DNA during genetic recombination and DNA repair, while the RuvA-RuvB complex plays an important role in the rescue of blocked DNA replication forks via replication fork reversal (RFR). RuvA specifically binds to HJ cruciform DNA, conferring on it an open structure. The RuvB hexamer acts as an ATP-dependent pump, pulling dsDNA into and through the RuvAB complex. RuvB forms 2 homohexamers on either side of HJ DNA bound by 1 or 2 RuvA tetramers; 4 subunits per hexamer contact DNA at a time. Coordinated motions by a converter formed by DNA-disengaged RuvB subunits stimulates ATP hydrolysis and nucleotide exchange. Immobilization of the converter enables RuvB to convert the ATP-contained energy into a lever motion, pulling 2 nucleotides of DNA out of the RuvA tetramer per ATP hydrolyzed, thus driving DNA branch migration. The RuvB motors rotate together with the DNA substrate, which together with the progressing nucleotide cycle form the mechanistic basis for DNA recombination by continuous HJ branch migration. Branch migration allows RuvC to scan DNA until it finds its consensus sequence, where it cleaves and resolves cruciform DNA. The protein is Holliday junction branch migration complex subunit RuvB of Geobacter metallireducens (strain ATCC 53774 / DSM 7210 / GS-15).